The following is a 196-amino-acid chain: MKVGVVGLQGDVSEHIEATKMAIEKLELPGEVIWLKRPEQLKGVDAVIIPGGESTTISRLMQRTGLFEPIKKMVEDGLPVMGTCAGLIMLAKEVLGATPEQKFLEVLDVKVNRNAYGRQVDSFEAPVKLAFDDEPFIGVFIRAPRIVELLSEKVKPLAWLEDRVVGVEQENIIGLEFHPELTNDTRIHEYFLRKVI.

52–54 (GES) is an L-glutamine binding site. Cys84 functions as the Nucleophile in the catalytic mechanism. L-glutamine-binding positions include Arg113 and 141–142 (IR). Catalysis depends on charge relay system residues His178 and Glu180.

The protein belongs to the glutaminase PdxT/SNO family. In the presence of PdxS, forms a dodecamer of heterodimers. Only shows activity in the heterodimer.

The enzyme catalyses aldehydo-D-ribose 5-phosphate + D-glyceraldehyde 3-phosphate + L-glutamine = pyridoxal 5'-phosphate + L-glutamate + phosphate + 3 H2O + H(+). The catalysed reaction is L-glutamine + H2O = L-glutamate + NH4(+). It participates in cofactor biosynthesis; pyridoxal 5'-phosphate biosynthesis. Functionally, catalyzes the hydrolysis of glutamine to glutamate and ammonia as part of the biosynthesis of pyridoxal 5'-phosphate. The resulting ammonia molecule is channeled to the active site of PdxS. This Pyrococcus horikoshii (strain ATCC 700860 / DSM 12428 / JCM 9974 / NBRC 100139 / OT-3) protein is Pyridoxal 5'-phosphate synthase subunit PdxT.